The following is a 1393-amino-acid chain: MFGENSRDIGVLSKEGLFDKLEIGIASDITIRDKWSCGEIKKPETINYRTFKPEKGGLFCEKIFGPTKDWECCCGKYKKIKHKGIVCDRCGVEVTLSKVRRERMAHIELAVPIVHIWFFKTTPSRIGNVLGMTASDLERVIYYEEYVVIDPGKTDLTKKQLLNDAQYREVVEKWGKDAFVAKMGGEAIYDLLKSEDLQSLLKDLKERLRKTKSQQARMKLAKRLKIIEGFVSSSNHPEWMVLKNIPVVPPDLRPLVPLDGGRFATSDLNDLYRRVINRNNRLKAILRLKTPEVIVRNEKRMLQEAVDALFDNGRHGHPVMGAGNRPLKSLSEMLKGKNGRFRQNLLGKRVDYSGRSVIIVGPELKFNQCGLPKEMALELFEPFIIKRLKDQGSVYTIRSAKKMIQRGAPEVWDVLEEIIKGHPVLLNRAPTLHRLGIQAFEPVLIEGKAIRIHPLVCAAFNADFDGDQMAVHVPLSVEAQLEAKVLMMAPDNIFLPSSGKPVAIPSKDMTLGLYYLMADPTYFPEEHGGKTKIFKDEIEVLRALNNGGFIDDVFGDRRDETGRGIHIHEKIKVRIDGQIIETTPGRVLFNRIVPKELGFQNYSMPSKRISELILQCYKKVGLEATVRFLDDLKDLGFIQATKAAISMGLKDVRIPDIKSHILKDAYDKVAIVKKQYDDGIITEGERHSKTISIWTEVSEQLSDALYVEISKQTRSKHNPLFLMIDSGARGNKSQLKQLGALRGLMAKPNGAIIESPITSNFREGLTVLEYSISSHGARKGLADTALKTADSGYLTRRLVDVAQDVIITEKDCGTLNHIEISAIGQGSEELLPLKDRIYGRTVAEDVYQPGDKSRLLAQSGDVLNSVQAEAIDDAGIETIKIRSTLTCESPRGVCAKCYGLNLANGRLIGMGEAVGIIAAQSIGEPGTQLTMRTFHLGGIAATSSTPEIITNSDGILVYMDLRVVLGQEGHNLVLNKKGALHVVGDEGRTLNEYKKLLSTKSIESLEVFPVELGVKILVADGTPVSQGQRIAEVELHNIPIICDKPGFIKYEDLVEGISTEKVVNKNTGLVELIVKQHRGELHPQIAIYDDADLSELVGTYAIPSGAIISVEEGQRVDPGMLLARLPRGAIKTKDITGGLPRVAELVEARKPEDAADIAKIDGVVDFKGIQKNKRILVVCDEMTGMEEEHLIPLTKHLIVQRGDSVIKGQQLTDGLVVPHEILEICGVRELQKYLVNEVQEVYRLQGVDINDKHIEIIVRQMLQKVRITDPGDTTLLFGEDVNKKEFYEENRRTEEDGGKPAQAVPVLLGITKASLGTESFISAASFQDTTRVLTDAACCSKTDYLLGFKENVIMGHMIPGGTGFETHKRIKQYLEKEQEDLVFDFVSETECVC.

4 residues coordinate Zn(2+): cysteine 72, cysteine 74, cysteine 87, and cysteine 90. Residues aspartate 463, aspartate 465, and aspartate 467 each contribute to the Mg(2+) site. Residues cysteine 812, cysteine 887, cysteine 894, and cysteine 897 each coordinate Zn(2+).

It belongs to the RNA polymerase beta' chain family. As to quaternary structure, the RNAP catalytic core consists of 2 alpha, 1 beta, 1 beta' and 1 omega subunit. When a sigma factor is associated with the core the holoenzyme is formed, which can initiate transcription. Mg(2+) is required as a cofactor. Zn(2+) serves as cofactor.

The enzyme catalyses RNA(n) + a ribonucleoside 5'-triphosphate = RNA(n+1) + diphosphate. DNA-dependent RNA polymerase catalyzes the transcription of DNA into RNA using the four ribonucleoside triphosphates as substrates. The protein is DNA-directed RNA polymerase subunit beta' of Chlamydia pneumoniae (Chlamydophila pneumoniae).